The following is a 179-amino-acid chain: Avenin-like a2 (179 aa).

Residues 1-19 (MKTMFLLALLAFTATSAVA) form the signal peptide.

It belongs to the prolamin family. Post-translationally, contains 7 disulfide bonds.

Seed storage protein. Not integrated in the gluten polymer through disulfide bonds, unless incorporated by reduction and reoxidation during dough making. Increases dough strength and bread volume, but decreases dough stability when added into a base wheat flour. This chain is Avenin-like a2, found in Triticum aestivum (Wheat).